A 140-amino-acid chain; its full sequence is ATP synthase epsilon chain (140 aa).

Belongs to the ATPase epsilon chain family. In terms of assembly, F-type ATPases have 2 components, CF(1) - the catalytic core - and CF(0) - the membrane proton channel. CF(1) has five subunits: alpha(3), beta(3), gamma(1), delta(1), epsilon(1). CF(0) has three main subunits: a, b and c.

It is found in the cell inner membrane. Produces ATP from ADP in the presence of a proton gradient across the membrane. In Legionella pneumophila (strain Lens), this protein is ATP synthase epsilon chain.